A 457-amino-acid chain; its full sequence is D-xylose transporter (457 aa).

The next 10 helical transmembrane spans lie at 14–34, 46–66, 81–101, 104–124, 131–151, 164–184, 244–264, 281–301, 309–329, and 338–358; these read ALGG…ILFI, GWVV…IGPS, IIFF…TLII, IILG…LAEL, GTVS…AYIT, WMLG…LILP, LIIG…TVLY, LLAH…AVAI, KIVN…SIGM, and AAII…ATWG. Q138 serves as a coordination point for beta-D-xylose. Beta-D-xylose is bound by residues 254–255 and N260; that span reads QQ. The beta-D-xylose site is built by W362 and N385. The next 2 helical transmembrane spans lie at 380-400 and 402-422; these read FASV…PSLL and FFGT…SIWF.

Belongs to the major facilitator superfamily. Sugar transporter (TC 2.A.1.1) family.

The protein resides in the cell membrane. With respect to regulation, transport is inhibited by 6-deoxy-D-glucose. In terms of biological role, uptake of D-xylose across the boundary membrane with the concomitant transport of protons into the cell (symport system). Transport is driven by the proton motive force generated by either malolactic fermentation or by the metabolism of D-glucose. The chain is D-xylose transporter from Levilactobacillus brevis (Lactobacillus brevis).